The sequence spans 261 residues: Lys-63-specific deubiquitinase BRCC36 (261 aa).

The region spanning 6–149 (VHIQGDAFLV…YTCFQSVQAQ (144 aa)) is the MPN domain. Positions 92, 94, and 105 each coordinate Zn(2+). Residues 92–105 (HSHPHITVWPSHVD) carry the JAMM motif motif.

Belongs to the peptidase M67A family. BRCC36 subfamily. In terms of assembly, component of the BRCA1-A complex, at least composed of brca1, bard1, uimc1/rap80, abraxas1, brcc3/brcc36, babam2 and babam1/nba1. In the BRCA1-A complex, interacts directly with abraxas1 and babam2. Component of the BRISC complex, at least composed of abraxas2, brcc3/brcc36, babam2 and babam1/nba1. Within the complex, interacts directly with abraxas2. Both the BRCA1-A complex and the BRISC complex bind polyubiquitin. Requires Zn(2+) as cofactor.

It is found in the nucleus. It localises to the cytoplasm. The protein localises to the cytoskeleton. Its subcellular location is the spindle pole. Its function is as follows. Metalloprotease that specifically cleaves 'Lys-63'-linked polyubiquitin chains. Does not have activity toward 'Lys-48'-linked polyubiquitin chains. Component of the BRCA1-A complex, a complex that specifically recognizes 'Lys-63'-linked ubiquitinated histones H2A and H2AX at DNA lesions sites, leading to target the brca1-bard1 heterodimer to sites of DNA damage at double-strand breaks (DSBs). In the BRCA1-A complex, it specifically removes 'Lys-63'-linked ubiquitin on histones H2A and H2AX, antagonizing the rnf8-dependent ubiquitination at double-strand breaks (DSBs). Catalytic subunit of the BRISC complex, a multiprotein complex that specifically cleaves 'Lys-63'-linked ubiquitin in various substrates. Mediates the specific 'Lys-63'-specific deubiquitination associated with the COP9 signalosome complex (CSN), via the interaction of the BRISC complex with the CSN complex. The BRISC complex is required for normal mitotic spindle assembly and microtubule attachment to kinetochores via its role in deubiquitinating numa1. Plays a role in interferon signaling via its role in the deubiquitination of the interferon receptor ifnar1; deubiquitination increases ifnar1 activity by enhancing its stability and cell surface expression. Acts as a regulator of the NLRP3 inflammasome by mediating deubiquitination of nlrp3. Down-regulates the response to bacterial lipopolysaccharide (LPS) via its role in ifnar1 deubiquitination. The polypeptide is Lys-63-specific deubiquitinase BRCC36 (brcc3) (Xenopus tropicalis (Western clawed frog)).